A 108-amino-acid chain; its full sequence is MLKTTLLFFATALCEIIGCYLPWLWLKRGATPLLLIPTGLALALFVWLLTLHPAASGRVYAAYGGVYVCTALLWLRVVDGVKLSHYDWAGAIIALCGMLIIVAGWGRA.

4 helical membrane passes run 6-26 (LLFF…WLWL), 29-49 (GATP…VWLL), 61-81 (AAYG…VDGV), and 86-106 (YDWA…AGWG).

It belongs to the UPF0060 family.

It is found in the cell inner membrane. The chain is UPF0060 membrane protein KPK_2870 from Klebsiella pneumoniae (strain 342).